Reading from the N-terminus, the 447-residue chain is ATP-dependent protease ATPase subunit HslU (447 aa).

Residues Ile-17, 59–64 (GVGKTE), Asp-256, Glu-321, and Arg-393 each bind ATP.

This sequence belongs to the ClpX chaperone family. HslU subfamily. A double ring-shaped homohexamer of HslV is capped on each side by a ring-shaped HslU homohexamer. The assembly of the HslU/HslV complex is dependent on binding of ATP.

The protein resides in the cytoplasm. Functionally, ATPase subunit of a proteasome-like degradation complex; this subunit has chaperone activity. The binding of ATP and its subsequent hydrolysis by HslU are essential for unfolding of protein substrates subsequently hydrolyzed by HslV. HslU recognizes the N-terminal part of its protein substrates and unfolds these before they are guided to HslV for hydrolysis. The sequence is that of ATP-dependent protease ATPase subunit HslU from Pseudomonas putida (strain GB-1).